A 450-amino-acid polypeptide reads, in one-letter code: 6-phospho-beta-glucosidase (450 aa).

NAD(+) is bound at residue 5 to 73 (LKVVTIGGGS…VPMKLYKTLD (69 aa)). R96 and N150 together coordinate substrate. The Mn(2+) site is built by C172 and H203. The active-site Proton acceptor is the Y258.

As to quaternary structure, homotetramer. It depends on NAD(+) as a cofactor. Requires Mn(2+) as cofactor. Co(2+) serves as cofactor. The cofactor is Ni(2+).

The catalysed reaction is 6-phospho-beta-D-glucosyl-(1-&gt;4)-D-glucose + H2O = D-glucose 6-phosphate + D-glucose. In terms of biological role, hydrolyzes a wide variety of P-beta-glucosides including cellobiose-6P, salicin-6P, arbutin-6P, gentiobiose-6P, methyl-beta-glucoside-6P and p-nitrophenyl-beta-D-glucopyranoside-6P. Is also able to hydrolyze phospho-N,N'-diacetylchitobiose. The chain is 6-phospho-beta-glucosidase (chbF) from Escherichia coli (strain K12).